The chain runs to 1263 residues: DNA-directed RNA polymerase subunit beta (1263 aa).

The protein belongs to the RNA polymerase beta chain family. As to quaternary structure, the RNAP catalytic core consists of 2 alpha, 1 beta, 1 beta' and 1 omega subunit. When a sigma factor is associated with the core the holoenzyme is formed, which can initiate transcription.

It catalyses the reaction RNA(n) + a ribonucleoside 5'-triphosphate = RNA(n+1) + diphosphate. DNA-dependent RNA polymerase catalyzes the transcription of DNA into RNA using the four ribonucleoside triphosphates as substrates. The polypeptide is DNA-directed RNA polymerase subunit beta (Thermotoga sp. (strain RQ2)).